A 184-amino-acid polypeptide reads, in one-letter code: MDLLSMVLIGVGLAMDAFSISVSRGLALHESETNYALISALSFGTFQAAMPVLGWVSGLEIQRLVSALAPWAAFILLLIIGLKMIYESLIMEEEEFIFSYRELLVLSIATSIDAFAVGVSFALLDISIWLPVIVIGLITFILSLAGSYIGERVGHIFENRLEALGGLILILIGLKILLENVSFT.

6 consecutive transmembrane segments (helical) span residues 3 to 23 (LLSM…ISVS), 36 to 56 (ALIS…LGWV), 65 to 85 (VSAL…LKMI), 103 to 123 (LLVL…SFAL), 126 to 146 (ISIW…SLAG), and 163 to 183 (ALGG…NVSF).

Belongs to the MntP (TC 9.B.29) family.

It is found in the cell membrane. Functionally, probably functions as a manganese efflux pump. The protein is Putative manganese efflux pump MntP of Methanothermobacter thermautotrophicus (strain ATCC 29096 / DSM 1053 / JCM 10044 / NBRC 100330 / Delta H) (Methanobacterium thermoautotrophicum).